A 475-amino-acid polypeptide reads, in one-letter code: Aspartyl/glutamyl-tRNA(Asn/Gln) amidotransferase subunit B (475 aa).

It belongs to the GatB/GatE family. GatB subfamily. As to quaternary structure, heterotrimer of A, B and C subunits.

It catalyses the reaction L-glutamyl-tRNA(Gln) + L-glutamine + ATP + H2O = L-glutaminyl-tRNA(Gln) + L-glutamate + ADP + phosphate + H(+). The catalysed reaction is L-aspartyl-tRNA(Asn) + L-glutamine + ATP + H2O = L-asparaginyl-tRNA(Asn) + L-glutamate + ADP + phosphate + 2 H(+). Functionally, allows the formation of correctly charged Asn-tRNA(Asn) or Gln-tRNA(Gln) through the transamidation of misacylated Asp-tRNA(Asn) or Glu-tRNA(Gln) in organisms which lack either or both of asparaginyl-tRNA or glutaminyl-tRNA synthetases. The reaction takes place in the presence of glutamine and ATP through an activated phospho-Asp-tRNA(Asn) or phospho-Glu-tRNA(Gln). This chain is Aspartyl/glutamyl-tRNA(Asn/Gln) amidotransferase subunit B, found in Bacillus cereus (strain B4264).